The primary structure comprises 376 residues: Acetylornithine aminotransferase (376 aa).

Pyridoxal 5'-phosphate-binding positions include 96-97 (GT) and Phe128. Arg131 is a binding site for N(2)-acetyl-L-ornithine. 213–216 (DEVQ) serves as a coordination point for pyridoxal 5'-phosphate. Lys242 carries the post-translational modification N6-(pyridoxal phosphate)lysine. Residue Ser270 participates in N(2)-acetyl-L-ornithine binding. A pyridoxal 5'-phosphate-binding site is contributed by Thr271.

This sequence belongs to the class-III pyridoxal-phosphate-dependent aminotransferase family. ArgD subfamily. As to quaternary structure, homodimer. It depends on pyridoxal 5'-phosphate as a cofactor.

Its subcellular location is the cytoplasm. The catalysed reaction is N(2)-acetyl-L-ornithine + 2-oxoglutarate = N-acetyl-L-glutamate 5-semialdehyde + L-glutamate. The protein operates within amino-acid biosynthesis; L-arginine biosynthesis; N(2)-acetyl-L-ornithine from L-glutamate: step 4/4. This chain is Acetylornithine aminotransferase, found in Aquifex aeolicus (strain VF5).